A 259-amino-acid polypeptide reads, in one-letter code: GDP-perosamine N-formyltransferase (259 aa).

(6S)-5,6,7,8-tetrahydrofolate contacts are provided by residues 89 to 91 (SLI) and 139 to 143 (DENFD).

Belongs to the Fmt family. As to quaternary structure, homodimer.

The enzyme catalyses GDP-alpha-D-perosamine + (6R)-10-formyltetrahydrofolate = GDP-N-formyl-alpha-D-perosamine + (6S)-5,6,7,8-tetrahydrofolate + H(+). Its pathway is bacterial outer membrane biogenesis; lipopolysaccharide biosynthesis. In terms of biological role, involved in the lipopolysaccharide (LPS) O-antigen biosynthesis. Catalyzes the transfer of a formyl group to GDP-perosamine, leading to the formation of GDP-N-formylperosamine. Is critical for full bacterial virulence. The chain is GDP-perosamine N-formyltransferase from Brucella abortus (strain 2308).